Reading from the N-terminus, the 675-residue chain is Probable potassium transport system protein Kup (675 aa).

Transmembrane regions (helical) follow at residues 12-32, 55-75, 98-118, 143-163, 170-190, 216-236, 249-269, 296-316, 345-365, 374-394, 401-421, and 428-448; these read LGMLITLGVVYGDIGTSPLYV, VSLIFWTLMLITTVKYVLVAL, WLIFVALIGGAALLADGTLTP, WLVPLSVTLILVSLFTIQVLG, SFGPMMLLWFIVIGGIGLLNI, MGIFILGSVFLATTGAEALYS, TWPFVYAMLILNYLGQGAWML, IAMIVLATVAAIIASQALITG, IYIGAINWLLCLVTLSIVWLF, AYGLAITLTMLMTTILLSQWV, FWSLALLAGFGLLETLFLVAS, and GGYLTLGLTLMIFLIMVVWFF.

This sequence belongs to the HAK/KUP transporter (TC 2.A.72) family.

The protein resides in the cell membrane. The enzyme catalyses K(+)(in) + H(+)(in) = K(+)(out) + H(+)(out). Functionally, transport of potassium into the cell. Likely operates as a K(+):H(+) symporter. This Levilactobacillus brevis (strain ATCC 367 / BCRC 12310 / CIP 105137 / JCM 1170 / LMG 11437 / NCIMB 947 / NCTC 947) (Lactobacillus brevis) protein is Probable potassium transport system protein Kup.